Reading from the N-terminus, the 230-residue chain is C-reactive protein (230 aa).

An N-terminal signal peptide occupies residues 1 to 19 (MEKLLWCLLITISFSQAFG). The Pentraxin (PTX) domain maps to 24 to 223 (SKQAFVFPGV…DVFIKPQLWP (200 aa)). Residues cysteine 55 and cysteine 114 are joined by a disulfide bond. Ca(2+) is bound at residue asparagine 78. N-linked (GlcNAc...) asparagine glycosylation occurs at asparagine 147. Ca(2+) contacts are provided by glutamate 155, glutamine 156, aspartate 157, and glutamine 167. An intrachain disulfide couples cysteine 227 to cysteine 228.

It belongs to the pentraxin family. In terms of assembly, homopentamer; disulfide-linked. Pentraxin (or pentaxin) have a discoid arrangement of 5 non-covalently bound subunits. Two of the five chains form a dimer linked by two interchain disulfide bonds located in the C-terminal heptapeptide and specific to rat CRP. Interacts with FCN1; may regulate monocyte activation by FCN1. It depends on Ca(2+) as a cofactor. The last two cysteines are involved either in interchain disulfide bonds or in an intrachain bond. As to expression, found in plasma.

It is found in the secreted. Displays several functions associated with host defense: it promotes agglutination, bacterial capsular swelling, phagocytosis and complement fixation through its calcium-dependent binding to phosphorylcholine. Can interact with DNA and histones and may scavenge nuclear material released from damaged circulating cells. The chain is C-reactive protein (Crp) from Rattus norvegicus (Rat).